Consider the following 487-residue polypeptide: V-type proton ATPase subunit B3 (487 aa).

Belongs to the ATPase alpha/beta chains family. As to quaternary structure, V-ATPase is a heteromultimeric enzyme composed of a peripheral catalytic V1 complex (components A to H) attached to an integral membrane V0 proton pore complex (components: a, c, c'', d and e).

It is found in the vacuole membrane. Non-catalytic subunit of the peripheral V1 complex of vacuolar ATPase. V-ATPase is responsible for acidifying a variety of intracellular compartments in eukaryotic cells. The chain is V-type proton ATPase subunit B3 (VHA-B3) from Arabidopsis thaliana (Mouse-ear cress).